Consider the following 251-residue polypeptide: Methionine aminopeptidase (251 aa).

Histidine 79 provides a ligand contact to substrate. Aspartate 96, aspartate 107, and histidine 170 together coordinate a divalent metal cation. Histidine 177 contributes to the substrate binding site. Residues glutamate 204 and glutamate 235 each coordinate a divalent metal cation.

Belongs to the peptidase M24A family. Methionine aminopeptidase type 1 subfamily. Monomer. Co(2+) is required as a cofactor. It depends on Zn(2+) as a cofactor. Requires Mn(2+) as cofactor. Fe(2+) serves as cofactor.

The catalysed reaction is Release of N-terminal amino acids, preferentially methionine, from peptides and arylamides.. Functionally, removes the N-terminal methionine from nascent proteins. The N-terminal methionine is often cleaved when the second residue in the primary sequence is small and uncharged (Met-Ala-, Cys, Gly, Pro, Ser, Thr, or Val). Requires deformylation of the N(alpha)-formylated initiator methionine before it can be hydrolyzed. The protein is Methionine aminopeptidase of Borreliella burgdorferi (strain ATCC 35210 / DSM 4680 / CIP 102532 / B31) (Borrelia burgdorferi).